Here is a 458-residue protein sequence, read N- to C-terminus: uncharacterized protein (458 aa).

Disordered regions lie at residues 339 to 397 and 434 to 458; these read GTGY…ARIL and YNSEDEDFEYDSDSEDDDSDSEDDC. Acidic residues-rich tracts occupy residues 344–390 and 436–458; these read SDSD…EEEP and SEDEDFEYDSDSEDDDSDSEDDC.

This is an uncharacterized protein from Invertebrate iridescent virus 3 (IIV-3).